We begin with the raw amino-acid sequence, 290 residues long: Expansin-A26 (290 aa).

The first 29 residues, 1 to 29, serve as a signal peptide directing secretion; that stretch reads MDTTTTMAPLPLLTTTSLLLFFFLASSFA. Residues 45-67 form a disordered region; that stretch reads DGGGDGEGGGGGDGEGGGGGGGA. The Expansin-like EG45 domain occupies 101–196; sequence GGACGYKDAD…RKVACVRQGG (96 aa). Positions 206-286 constitute an Expansin-like CBD domain; that stretch reads SYNMVMVKNV…DWTYDNTYQA (81 aa). A glycan (N-linked (GlcNAc...) asparagine) is linked at Asn250.

This sequence belongs to the expansin family. Expansin A subfamily. Expressed in flowers.

Its subcellular location is the secreted. It localises to the cell wall. It is found in the membrane. In terms of biological role, may cause loosening and extension of plant cell walls by disrupting non-covalent bonding between cellulose microfibrils and matrix glucans. No enzymatic activity has been found. May be required for rapid internodal elongation in deepwater rice during submergence. The polypeptide is Expansin-A26 (EXPA26) (Oryza sativa subsp. japonica (Rice)).